The following is a 156-amino-acid chain: Transcription elongation factor GreA (156 aa).

Residues 12-72 are a coiled coil; that stretch reads YKKLEDELST…KEIEHELKYA (61 aa).

Belongs to the GreA/GreB family.

Its function is as follows. Necessary for efficient RNA polymerase transcription elongation past template-encoded arresting sites. The arresting sites in DNA have the property of trapping a certain fraction of elongating RNA polymerases that pass through, resulting in locked ternary complexes. Cleavage of the nascent transcript by cleavage factors such as GreA or GreB allows the resumption of elongation from the new 3'terminus. GreA releases sequences of 2 to 3 nucleotides. This chain is Transcription elongation factor GreA, found in Dehalococcoides mccartyi (strain ATCC BAA-2266 / KCTC 15142 / 195) (Dehalococcoides ethenogenes (strain 195)).